A 316-amino-acid chain; its full sequence is tRNA-cytidine(32) 2-sulfurtransferase (316 aa).

A disordered region spans residues 1-31 (MGAVIDDSMPGPGADATGTGPSDARTERETR). Residues 10-21 (PGPGADATGTGP) show a composition bias toward low complexity. Positions 62–67 (SGGKDS) match the PP-loop motif motif. [4Fe-4S] cluster is bound by residues cysteine 137, cysteine 140, and cysteine 228.

Belongs to the TtcA family. As to quaternary structure, homodimer. Mg(2+) is required as a cofactor. It depends on [4Fe-4S] cluster as a cofactor.

The protein localises to the cytoplasm. It catalyses the reaction cytidine(32) in tRNA + S-sulfanyl-L-cysteinyl-[cysteine desulfurase] + AH2 + ATP = 2-thiocytidine(32) in tRNA + L-cysteinyl-[cysteine desulfurase] + A + AMP + diphosphate + H(+). It participates in tRNA modification. In terms of biological role, catalyzes the ATP-dependent 2-thiolation of cytidine in position 32 of tRNA, to form 2-thiocytidine (s(2)C32). The sulfur atoms are provided by the cysteine/cysteine desulfurase (IscS) system. This Verminephrobacter eiseniae (strain EF01-2) protein is tRNA-cytidine(32) 2-sulfurtransferase.